A 464-amino-acid polypeptide reads, in one-letter code: Asparagine--tRNA ligase (464 aa).

This sequence belongs to the class-II aminoacyl-tRNA synthetase family. As to quaternary structure, homodimer.

Its subcellular location is the cytoplasm. It carries out the reaction tRNA(Asn) + L-asparagine + ATP = L-asparaginyl-tRNA(Asn) + AMP + diphosphate + H(+). This chain is Asparagine--tRNA ligase, found in Xanthomonas euvesicatoria pv. vesicatoria (strain 85-10) (Xanthomonas campestris pv. vesicatoria).